The sequence spans 377 residues: Cell division cycle-associated protein 7 (377 aa).

Disordered regions lie at residues 58-113 (RTRS…EEDG) and 144-211 (IFSG…EEDK). Residues 76 to 100 (PARNTRRAANTKAAPPKPSESSAND) are compositionally biased toward low complexity. The interaction with MYC stretch occupies residues 148–173 (RHSLPGHRTKDSKSPRRRTFPGVASR). A Nuclear localization signal motif is present at residues 163-179 (RRRTFPGVASRRNPERR). Thr166 carries the post-translational modification Phosphothreonine. Ser193 carries the phosphoserine modification. Residue Thr199 is modified to Phosphothreonine. The segment covering 199 to 210 (TEEEEDEEEEED) has biased composition (acidic residues). Lys211 participates in a covalent cross-link: Glycyl lysine isopeptide (Lys-Gly) (interchain with G-Cter in SUMO2). Ser220 is modified (phosphoserine). A mediates transcriptional activity region spans residues 253-377 (EEEIRNICSN…SLKQEFEMQA (125 aa)).

As to quaternary structure, interacts with MYC (via C-terminus), YWHAE and YWHAZ. Post-translationally, phosphorylation at Thr-166 promotes interaction with YWHAE and YWHAZ, dissociation from MYC and sequestration in the cytoplasm.

It is found in the nucleus. It localises to the cytoplasm. Its function is as follows. Participates in MYC-mediated cell transformation and apoptosis; induces anchorage-independent growth and clonogenicity in lymphoblastoid cells. Insufficient to induce tumorigenicity when overexpressed but contributes to MYC-mediated tumorigenesis. May play a role as transcriptional regulator. The polypeptide is Cell division cycle-associated protein 7 (Cdca7) (Rattus norvegicus (Rat)).